Reading from the N-terminus, the 508-residue chain is Photosystem II CP47 reaction center protein (508 aa).

6 consecutive transmembrane segments (helical) span residues 21–36 (SVHI…WAGS), 101–115 (IVFS…IWHW), 140–156 (GIHL…FGAF), 203–218 (IAAG…FHLS), 237–252 (VLSS…AFVV), and 457–472 (SFAL…HGAR).

Belongs to the PsbB/PsbC family. PsbB subfamily. PSII is composed of 1 copy each of membrane proteins PsbA, PsbB, PsbC, PsbD, PsbE, PsbF, PsbH, PsbI, PsbJ, PsbK, PsbL, PsbM, PsbT, PsbX, PsbY, PsbZ, Psb30/Ycf12, at least 3 peripheral proteins of the oxygen-evolving complex and a large number of cofactors. It forms dimeric complexes. It depends on Binds multiple chlorophylls. PSII binds additional chlorophylls, carotenoids and specific lipids. as a cofactor.

The protein localises to the plastid. It localises to the chloroplast thylakoid membrane. Its function is as follows. One of the components of the core complex of photosystem II (PSII). It binds chlorophyll and helps catalyze the primary light-induced photochemical processes of PSII. PSII is a light-driven water:plastoquinone oxidoreductase, using light energy to abstract electrons from H(2)O, generating O(2) and a proton gradient subsequently used for ATP formation. The sequence is that of Photosystem II CP47 reaction center protein from Glycine max (Soybean).